The primary structure comprises 356 residues: Heat-inducible transcription repressor HrcA (356 aa).

It belongs to the HrcA family.

Its function is as follows. Negative regulator of class I heat shock genes (grpE-dnaK-dnaJ and groELS operons). Prevents heat-shock induction of these operons. The sequence is that of Heat-inducible transcription repressor HrcA from Chlorobaculum tepidum (strain ATCC 49652 / DSM 12025 / NBRC 103806 / TLS) (Chlorobium tepidum).